The chain runs to 306 residues: Follistatin-related protein 1 (306 aa).

The signal sequence occupies residues 1 to 18 (MWKRWLALALVTIALVHG). In terms of domain architecture, Follistatin-like spans 28-51 (ICANVFCGAGRECAVTEKGEPTCL). 5 disulfide bridges follow: cysteine 29–cysteine 40, cysteine 34–cysteine 50, cysteine 52–cysteine 82, cysteine 56–cysteine 75, and cysteine 64–cysteine 96. Residues 46-98 (GEPTCLCIEQCKPHKRPVCGSNGKTYLNHCELHRDACLTGSKIQVDYDGHCKE) enclose the Kazal-like domain. Asparagine 142 carries an N-linked (GlcNAc...) asparagine glycan. An EF-hand 1 domain is found at 142–176 (NYSEILDKYFKSFDNGDSHLDSSEFLKFVEQNETA). A Phosphoserine modification is found at serine 163. Residues asparagine 173 and asparagine 178 are each glycosylated (N-linked (GlcNAc...) asparagine). Positions 191-226 (LRGLCVDALIELSDENADWKLSFQEFLKCLNPSFNP) constitute an EF-hand 2 domain. Residues 231 to 285 (CALEDETYADGAETEVDCNRCVCSCGHWVCTAMTCDGKNQKGVQTHTEEEMTRYA) form the VWFC domain.

In terms of assembly, homodimer. Interacts with SCN10A. Interacts with DIP2A; DIP2A may act as a cell surface receptor for FSTL1. Interacts with BMP4. Interacts with CD14; this interaction promotes TL4-mediated signaling cascade.

It is found in the secreted. Its function is as follows. Secreted glycoprotein that is involved in various physiological processes, such as angiogenesis, regulation of the immune response, cell proliferation and differentiation. Plays a role in the development of the central nervous system, skeletal system, lungs, and ureter. Promotes endothelial cell survival, migration and differentiation into network structures in an AKT-dependent manner. Also promotes survival of cardiac myocytes. Initiates various signaling cascades by activating different receptors on the cell surface such as DIP2A, TLR4 or BMP receptors. The polypeptide is Follistatin-related protein 1 (Fstl1) (Rattus norvegicus (Rat)).